We begin with the raw amino-acid sequence, 464 residues long: Probable mannosyltransferase KTR4 (464 aa).

Residues 1-11 (MRFLSKRILKP) are Cytoplasmic-facing. A helical; Signal-anchor for type II membrane protein transmembrane segment spans residues 12–32 (VLSVIILISIAVTVVLYFLTA). Residues 33 to 130 (NENYLQAVKD…NLVRSGDPLA (98 aa)) are stem region. Residues 33–464 (NENYLQAVKD…SMSEEELEMY (432 aa)) are Lumenal-facing. Residues 131–464 (GKAKGTILSL…SMSEEELEMY (334 aa)) form a catalytic region. Glu-352 functions as the Nucleophile in the catalytic mechanism.

This sequence belongs to the glycosyltransferase 15 family.

The protein resides in the membrane. Functionally, possible glycosyltransferase that transfers an alpha-D-mannosyl residue from GDP-mannose into lipid-linked oligosaccharide, forming an alpha-(1-&gt;2)-D-mannosyl-D-mannose linkage. The protein is Probable mannosyltransferase KTR4 (KTR4) of Saccharomyces cerevisiae (strain ATCC 204508 / S288c) (Baker's yeast).